Here is a 912-residue protein sequence, read N- to C-terminus: Phosphoenolpyruvate carboxylase (912 aa).

Catalysis depends on residues H138 and K575.

This sequence belongs to the PEPCase type 1 family. Requires Mg(2+) as cofactor.

The enzyme catalyses oxaloacetate + phosphate = phosphoenolpyruvate + hydrogencarbonate. In terms of biological role, forms oxaloacetate, a four-carbon dicarboxylic acid source for the tricarboxylic acid cycle. The polypeptide is Phosphoenolpyruvate carboxylase (Lactobacillus acidophilus (strain ATCC 700396 / NCK56 / N2 / NCFM)).